A 957-amino-acid chain; its full sequence is MIEKTYQPADIEARISRAWEDAEAFKAGRPERRDAVPYSIVIPPPNVTGSLHMGHALNNTLQDILCRFERMRGRDVLWQPGTDHAGIATQMVVERQLMERQEPSRRDMGRAKFLERVWQWKAESGGVIVNQLKRLGASCDWSRERFTMDEGLSRAVAKVFVELHRQGLIYKDKRLVNWDPKLLTAISDLEVQQIEVKGNLWHLRYPIEGKTFDPADPSSFIVVATTRPETMLGDSAVAVNPEDERYTHLVGKHVILPLVGRRIPIVADEYSDPEKGSGAVKITPAHDFNDFEVGKRHHLPQINVLDIEGKISVADNSAYLEGLPEGAREFAGEIDGTDRFVARKIIVARLDDFGFLEKIEPNVHMVPHGDRSGVVIEPFLTDQWYVDAKTLAQPAIAAVRSGETTFVPKNWEKTYFEWMENIQPWCISRQLWWGHQIPAWYGPDGKVFVAETEEEAVGNALGYYVEQEVITPAQAHDMAEDPAKREGFITRDEDVLDTWFSSALWPFSTLGWPDETPELDRYYPTNVLVTGFDIIFFWVARMMMMGLHFMDDVPFPTVYIHALVRDEKGAKMSKSKGNVIDPLNLIDEYGADALRFTLAAMAAQGRDIKLATSRVEGYRNFATKLWNACRFAEMNGCVAPAGFDYTAAKETLNRWIAHETVRAVREVTEAIESYRFNDAAEAAYRFVWNVYCDWYLELAKPVLMGEEGAAKTETRAMVAWARDEILKILHPFMPFITEELWAVTAPRDGLLALAPWSRKGGISDEEVSVLAASAATDPMAGPAMLAIPEPQEPDFTDDAAEAEIGWVVDLVTAIRSVRAEMNIVPSTLTPLVLAGASADTNARASRWSDVIKRLARVGEISFADAAPQGAVQLLVRGEVAALPLKGVVDFAAEQARLEKELGKAEADIKRAEAKLANEKFVANAAEEVVEEEREKREAAVARKVKILEALLRLKNAS.

The short motif at 45–55 (PNVTGSLHMGH) is the 'HIGH' region element. Residues 571-575 (KMSKS) carry the 'KMSKS' region motif. K574 is a binding site for ATP. A coiled-coil region spans residues 887-946 (VVDFAAEQARLEKELGKAEADIKRAEAKLANEKFVANAAEEVVEEEREKREAAVARKVKI).

The protein belongs to the class-I aminoacyl-tRNA synthetase family. ValS type 1 subfamily. In terms of assembly, monomer.

The protein localises to the cytoplasm. It catalyses the reaction tRNA(Val) + L-valine + ATP = L-valyl-tRNA(Val) + AMP + diphosphate. Functionally, catalyzes the attachment of valine to tRNA(Val). As ValRS can inadvertently accommodate and process structurally similar amino acids such as threonine, to avoid such errors, it has a 'posttransfer' editing activity that hydrolyzes mischarged Thr-tRNA(Val) in a tRNA-dependent manner. This Rhodopseudomonas palustris (strain ATCC BAA-98 / CGA009) protein is Valine--tRNA ligase.